Here is a 94-residue protein sequence, read N- to C-terminus: Co-chaperonin GroES (94 aa).

It belongs to the GroES chaperonin family. Heptamer of 7 subunits arranged in a ring. Interacts with the chaperonin GroEL.

Its subcellular location is the cytoplasm. Together with the chaperonin GroEL, plays an essential role in assisting protein folding. The GroEL-GroES system forms a nano-cage that allows encapsulation of the non-native substrate proteins and provides a physical environment optimized to promote and accelerate protein folding. GroES binds to the apical surface of the GroEL ring, thereby capping the opening of the GroEL channel. This chain is Co-chaperonin GroES, found in Thermoanaerobacter pseudethanolicus (strain ATCC 33223 / 39E) (Clostridium thermohydrosulfuricum).